We begin with the raw amino-acid sequence, 327 residues long: Cell division protein ZipA (327 aa).

Over 1–5 (MQDLR) the chain is Periplasmic. A helical membrane pass occupies residues 6 to 26 (LILIVVGAIAIIALLLHGLWT). Residues 27 to 327 (SRKERSSLFR…REVLDANTIA (301 aa)) lie on the Cytoplasmic side of the membrane. Residues 60–71 (GEVRVRTSHPQE) show a composition bias toward basic and acidic residues. Positions 60–182 (GEVRVRTSHP…EPVAPAPEAK (123 aa)) are disordered. 2 stretches are compositionally biased toward polar residues: residues 94-103 (KSAQVKTASR) and 163-173 (APQQHVESQQE).

Belongs to the ZipA family. In terms of assembly, interacts with FtsZ via their C-terminal domains.

Its subcellular location is the cell inner membrane. Functionally, essential cell division protein that stabilizes the FtsZ protofilaments by cross-linking them and that serves as a cytoplasmic membrane anchor for the Z ring. Also required for the recruitment to the septal ring of downstream cell division proteins. The chain is Cell division protein ZipA from Yersinia pseudotuberculosis serotype O:1b (strain IP 31758).